A 30-amino-acid polypeptide reads, in one-letter code: U5-ctenitoxin-Pk1b (30 aa).

2 cysteine pairs are disulfide-bonded: Cys6/Cys23 and Cys13/Cys29.

It belongs to the neurotoxin 04 (omega-agtx) family. 02 (Tx1) subfamily. In terms of tissue distribution, expressed by the venom gland.

It is found in the secreted. Lethal neurotoxin. Causes spastic paralysis and death in mice in 4-6 minutes after intracerebroventricular injection at dose levels of 1.5 ug per mouse. The polypeptide is U5-ctenitoxin-Pk1b (Phoneutria keyserlingi (Brazilian wandering spider)).